A 236-amino-acid polypeptide reads, in one-letter code: MSDPVASAPRTKRVVRIVILVALALLALPYLLTILYGGGQPVSTLMLWRWATGAPVSRTWIDIENISPALPRSVVAAEDAKFCSHHGIDWDSVRDVIDDMQDGEASRGGSTITQQVAKNLFLWPGRSMIRKALEAPLALWIDFVLPKQRILEIYLNIAEWGPDGQFGAMAGADYAFGRSAAQLSAKEAATLAAILPNPRVRSAKAPGPGVRRLAATYVARARAAELRQCWRENRES.

The chain crosses the membrane as a helical span at residues 17 to 37 (IVILVALALLALPYLLTILYG).

It belongs to the glycosyltransferase 51 family.

Its subcellular location is the cell inner membrane. It carries out the reaction [GlcNAc-(1-&gt;4)-Mur2Ac(oyl-L-Ala-gamma-D-Glu-L-Lys-D-Ala-D-Ala)](n)-di-trans,octa-cis-undecaprenyl diphosphate + beta-D-GlcNAc-(1-&gt;4)-Mur2Ac(oyl-L-Ala-gamma-D-Glu-L-Lys-D-Ala-D-Ala)-di-trans,octa-cis-undecaprenyl diphosphate = [GlcNAc-(1-&gt;4)-Mur2Ac(oyl-L-Ala-gamma-D-Glu-L-Lys-D-Ala-D-Ala)](n+1)-di-trans,octa-cis-undecaprenyl diphosphate + di-trans,octa-cis-undecaprenyl diphosphate + H(+). The protein operates within cell wall biogenesis; peptidoglycan biosynthesis. In terms of biological role, peptidoglycan polymerase that catalyzes glycan chain elongation from lipid-linked precursors. This is Biosynthetic peptidoglycan transglycosylase from Rhodopseudomonas palustris (strain ATCC BAA-98 / CGA009).